A 695-amino-acid polypeptide reads, in one-letter code: Pre-mRNA-splicing factor clf-1 (695 aa).

16 HAT repeats span residues 52–84 (EYQG…WELE), 86–118 (KEFA…AEIK), 120–152 (RNIN…VMEM), 154–185 (GDIP…LEKR), 187–218 (GEFD…FEEE), 220–259 (GTSD…YEAR), 261–295 (REYE…FEKQ), 305–337 (VILT…LEES), 339–373 (GDVD…LFLF), 383–419 (KDIG…FEIR), 421–452 (GQLT…LEQK), 454–486 (YEFE…LERG), 488–522 (DDLE…FEEE), 524–555 (GEYE…FEIN), 578–616 (EAKA…FEKT), and 621–654 (EDIE…YIFP).

The protein belongs to the crooked-neck family. Associated with the spliceosome.

It is found in the nucleus. Functionally, involved in pre-mRNA splicing and cell cycle progression. Required for the spliceosome assembly and initiation of the DNA replication. This chain is Pre-mRNA-splicing factor clf-1 (clf-1), found in Neurospora crassa (strain ATCC 24698 / 74-OR23-1A / CBS 708.71 / DSM 1257 / FGSC 987).